Here is a 359-residue protein sequence, read N- to C-terminus: Phospho-N-acetylmuramoyl-pentapeptide-transferase (359 aa).

At methionine 1–arginine 25 the chain is on the periplasmic side. A helical transmembrane segment spans residues serine 26–leucine 48. The Cytoplasmic segment spans residues arginine 49–proline 74. Lysine 70 and threonine 75 together coordinate muraymycin D2. A helical membrane pass occupies residues threonine 75–leucine 92. At methionine 93–lysine 98 the chain is on the periplasmic side. Residues tyrosine 99–valine 120 form a helical membrane-spanning segment. Residues lysine 121 to isoleucine 130 lie on the Cytoplasmic side of the membrane. A helical membrane pass occupies residues lysine 131–alanine 152. At aspartate 153–valine 172 the chain is on the periplasmic side. A helical membrane pass occupies residues leucine 173–glycine 194. Residues asparagine 190, aspartate 193, and aspartate 196 each coordinate muraymycin D2. At leucine 195–glycine 197 the chain is on the cytoplasmic side. A helical transmembrane segment spans residues leucine 198–glycine 218. The Periplasmic portion of the chain corresponds to histidine 219–tyrosine 233. The chain crosses the membrane as a helical span at residues alanine 234–asparagine 255. The Cytoplasmic segment spans residues serine 256–glycine 264. Residues glycine 264 and serine 268 each contribute to the muraymycin D2 site. The helical transmembrane segment at aspartate 265–leucine 280 threads the bilayer. Topologically, residues leucine 281–serine 284 are periplasmic. A helical membrane pass occupies residues glutamate 285–arginine 310. Muraymycin D2 is bound by residues glutamine 305 and alanine 321. Topologically, residues tryptophan 311–leucine 332 are cytoplasmic. A helical transmembrane segment spans residues proline 333–methionine 355. The Periplasmic segment spans residues leucine 356–arginine 359.

This sequence belongs to the glycosyltransferase 4 family. MraY subfamily. As to quaternary structure, homodimer. Mg(2+) is required as a cofactor. Requires Mn(2+) as cofactor.

It is found in the cell inner membrane. It catalyses the reaction UDP-N-acetyl-alpha-D-muramoyl-L-alanyl-gamma-D-glutamyl-meso-2,6-diaminopimeloyl-D-alanyl-D-alanine + di-trans,octa-cis-undecaprenyl phosphate = di-trans,octa-cis-undecaprenyl diphospho-N-acetyl-alpha-D-muramoyl-L-alanyl-D-glutamyl-meso-2,6-diaminopimeloyl-D-alanyl-D-alanine + UMP. The protein operates within cell wall biogenesis; peptidoglycan biosynthesis. With respect to regulation, inhibited by natural nucleoside antibiotics including tunicamycin, capuramycin and muraymycin. Usually the cofactor magnesium is not required for antibiotic binding. Catalyzes the initial step of the lipid cycle reactions in the biosynthesis of the cell wall peptidoglycan: transfers peptidoglycan precursor phospho-MurNAc-pentapeptide from UDP-MurNAc-pentapeptide onto the lipid carrier undecaprenyl phosphate, yielding undecaprenyl-pyrophosphoryl-MurNAc-pentapeptide, known as lipid I. The polypeptide is Phospho-N-acetylmuramoyl-pentapeptide-transferase (Aquifex aeolicus (strain VF5)).